The sequence spans 748 residues: Elongation factor G, mitochondrial (748 aa).

Residues 1 to 14 (MTISSFLRVRHSLA) constitute a mitochondrion transit peptide. The region spanning 40-318 (ERIRNIGISA…VLNYLPHPGE (279 aa)) is the tr-type G domain. Residues 49–56 (AHIDSGKT), 116–120 (DTPGH), and 170–173 (NKLD) contribute to the GTP site.

Belongs to the TRAFAC class translation factor GTPase superfamily. Classic translation factor GTPase family. EF-G/EF-2 subfamily.

The protein resides in the mitochondrion. The protein operates within protein biosynthesis; polypeptide chain elongation. Functionally, mitochondrial GTPase that catalyzes the GTP-dependent ribosomal translocation step during translation elongation. During this step, the ribosome changes from the pre-translocational (PRE) to the post-translocational (POST) state as the newly formed A-site-bound peptidyl-tRNA and P-site-bound deacylated tRNA move to the P and E sites, respectively. Catalyzes the coordinated movement of the two tRNA molecules, the mRNA and conformational changes in the ribosome. The sequence is that of Elongation factor G, mitochondrial from Aedes aegypti (Yellowfever mosquito).